The sequence spans 522 residues: Ribose import ATP-binding protein RbsA 1 (522 aa).

ABC transporter domains are found at residues Leu-8–Ile-243 and Arg-249–Asn-496. Position 40–47 (Gly-40–Ser-47) interacts with ATP. Residues Ala-492–His-522 form a disordered region. Over residues Lys-499–His-522 the composition is skewed to basic and acidic residues.

The protein belongs to the ABC transporter superfamily. Ribose importer (TC 3.A.1.2.1) family. In terms of assembly, the complex is composed of an ATP-binding protein (RbsA), two transmembrane proteins (RbsC) and a solute-binding protein (RbsB).

It localises to the cell membrane. It carries out the reaction D-ribose(out) + ATP + H2O = D-ribose(in) + ADP + phosphate + H(+). Functionally, part of the ABC transporter complex RbsABC involved in ribose import. Responsible for energy coupling to the transport system. The chain is Ribose import ATP-binding protein RbsA 1 from Streptomyces avermitilis (strain ATCC 31267 / DSM 46492 / JCM 5070 / NBRC 14893 / NCIMB 12804 / NRRL 8165 / MA-4680).